Reading from the N-terminus, the 280-residue chain is MAIRKYKPTTPGRRGASVSDFAEITRSTPEKSLVRPLHGHGGRNAHGRITTRHKGGGHKRAYRVIDFRRNDKDGVNAKVAHIEYDPNRTARIALLHYLDGEKRYIIAPNGLSQGDVVESGANADIKPGNNLPLRNIPAGTLVHAVELRPGGGAKLARSAGSSIQLLGKEASYASLRMPSGEIRRVDVRCRATVGEVGNAEQANINWGKAGRMRWKGKRPSVRGVVMNPVDHPHGGGEGKTSGGRHPVSPWGKPEGRTRNPNKASNKLIVRRRRTGKKHGR.

Disordered stretches follow at residues 27–58 and 226–280; these read STPE…GGGH and MNPV…KHGR. Composition is skewed to basic residues over residues 37-58 and 268-280; these read LHGH…GGGH and IVRR…KHGR.

Belongs to the universal ribosomal protein uL2 family. Part of the 50S ribosomal subunit. Forms a bridge to the 30S subunit in the 70S ribosome.

Functionally, one of the primary rRNA binding proteins. Required for association of the 30S and 50S subunits to form the 70S ribosome, for tRNA binding and peptide bond formation. It has been suggested to have peptidyltransferase activity; this is somewhat controversial. Makes several contacts with the 16S rRNA in the 70S ribosome. The chain is Large ribosomal subunit protein uL2 from Mycobacterium marinum (strain ATCC BAA-535 / M).